The chain runs to 129 residues: Lysozyme C (129 aa).

Positions 1-129 (KVYGRCELAA…VHAWIRGCRL (129 aa)) constitute a C-type lysozyme domain. Intrachain disulfides connect cysteine 6–cysteine 127, cysteine 30–cysteine 115, cysteine 64–cysteine 80, and cysteine 76–cysteine 94. Catalysis depends on residues glutamate 35 and aspartate 52.

Belongs to the glycosyl hydrolase 22 family. Monomer.

Its subcellular location is the secreted. It catalyses the reaction Hydrolysis of (1-&gt;4)-beta-linkages between N-acetylmuramic acid and N-acetyl-D-glucosamine residues in a peptidoglycan and between N-acetyl-D-glucosamine residues in chitodextrins.. Lysozymes have primarily a bacteriolytic function; those in tissues and body fluids are associated with the monocyte-macrophage system and enhance the activity of immunoagents. The protein is Lysozyme C (LYZ) of Lophophorus impejanus (Himalayan monal pheasant).